A 148-amino-acid chain; its full sequence is D-aminoacyl-tRNA deacylase (148 aa).

A Gly-cisPro motif, important for rejection of L-amino acids motif is present at residues 137 to 138 (GP).

The protein belongs to the DTD family. Homodimer.

The protein resides in the cytoplasm. The catalysed reaction is glycyl-tRNA(Ala) + H2O = tRNA(Ala) + glycine + H(+). It catalyses the reaction a D-aminoacyl-tRNA + H2O = a tRNA + a D-alpha-amino acid + H(+). An aminoacyl-tRNA editing enzyme that deacylates mischarged D-aminoacyl-tRNAs. Also deacylates mischarged glycyl-tRNA(Ala), protecting cells against glycine mischarging by AlaRS. Acts via tRNA-based rather than protein-based catalysis; rejects L-amino acids rather than detecting D-amino acids in the active site. By recycling D-aminoacyl-tRNA to D-amino acids and free tRNA molecules, this enzyme counteracts the toxicity associated with the formation of D-aminoacyl-tRNA entities in vivo and helps enforce protein L-homochirality. This Lacticaseibacillus casei (strain BL23) (Lactobacillus casei) protein is D-aminoacyl-tRNA deacylase.